A 101-amino-acid polypeptide reads, in one-letter code: Small ribosomal subunit protein uS14 (101 aa).

This sequence belongs to the universal ribosomal protein uS14 family. In terms of assembly, part of the 30S ribosomal subunit. Contacts proteins S3 and S10.

Its function is as follows. Binds 16S rRNA, required for the assembly of 30S particles and may also be responsible for determining the conformation of the 16S rRNA at the A site. In Erythrobacter litoralis (strain HTCC2594), this protein is Small ribosomal subunit protein uS14.